The chain runs to 628 residues: Zinc finger protein 555 (628 aa).

The KRAB domain occupies V4–N77. Residues Y172–H194 form a C2H2-type 1; degenerate zinc finger. 14 consecutive C2H2-type zinc fingers follow at residues Y200 to H222, Y228 to H250, Y256 to H278, Y284 to H306, H312 to H334, Y340 to H362, Y368 to H390, Y396 to H418, Y424 to H446, Y452 to H474, Y480 to H502, Y508 to H530, Y536 to H558, and Y564 to H586.

The protein belongs to the krueppel C2H2-type zinc-finger protein family.

The protein localises to the nucleus. Its function is as follows. May be involved in transcriptional regulation. This Homo sapiens (Human) protein is Zinc finger protein 555 (ZNF555).